The following is a 507-amino-acid chain: Glucose transporter type 3 (507 aa).

A disordered region spans residues 1-26 (MRKGGIQDAEPVEPPQSSRKSGTWFA). The Cytoplasmic portion of the chain corresponds to 1-53 (MRKGGIQDAEPVEPPQSSRKSGTWFAKRPSEMPERHVERAPVRQKINNVGLYK). A helical membrane pass occupies residues 54–74 (ATLYSNIGSFFFGIAVGWSGT). The Extracellular segment spans residues 75–95 (AERSVMEQHSYSFQPTELQWS). A helical transmembrane segment spans residues 96-116 (GVCILLTLGAALWCLPMGLMV). Residues 117 to 124 (RLLGCRRT) lie on the Cytoplasmic side of the membrane. The chain crosses the membrane as a helical span at residues 125–145 (ILIQLLPNFLGWFLTVFARSV). The Extracellular portion of the chain corresponds to 146 to 152 (PMLYAGR). A helical transmembrane segment spans residues 153–173 (FFLGMCGGAHCVVVPIYNAEI). Residues 174–183 (STTKKRGAMG) are Cytoplasmic-facing. Residues 184-204 (VVFEGACICGVIYSFAMSLFL) form a helical membrane-spanning segment. Residues 205–207 (ELR) are Extracellular-facing. A helical transmembrane segment spans residues 208–228 (IINFVNLGLLALGPLQILMPE). Topologically, residues 229 to 293 (SPAYYVDHGN…YKKVRRSLAR (65 aa)) are cytoplasmic. Residues 294–314 (SLAIALLQKLCGALIFIFYGL) form a helical membrane-spanning segment. Topologically, residues 315 to 324 (NMLDCLRIRR) are extracellular. The chain crosses the membrane as a helical span at residues 325 to 345 (EFGLILCLGLILGFLACFFLV). Residues 346–351 (DRLGRR) lie on the Cytoplasmic side of the membrane. Residues 352-372 (PLLIFSSAGIVFVSIYLGLHF) traverse the membrane as a helical segment. The Extracellular portion of the chain corresponds to 373-374 (KV). The helical transmembrane segment at 375–395 (WMTMGLTVMSWIALFCIAIFV) threads the bilayer. The Cytoplasmic segment spans residues 396–420 (GCYTAGVGSLTWVLNAELLVRPMRP). A helical membrane pass occupies residues 421-441 (LGCSIVCAFNWLTAFFVICWF). Over 442–450 (GSHGVKCQP) the chain is Extracellular. The chain crosses the membrane as a helical span at residues 451–471 (YLFLLFAIIASLILLFSLIYI). Residues 472 to 507 (PETKKLSSAKIQQRLGGLINRPAVITFTSSSDSSNA) lie on the Cytoplasmic side of the membrane.

This sequence belongs to the major facilitator superfamily. Sugar transporter (TC 2.A.1.1) family. Glucose transporter subfamily.

The protein localises to the cell membrane. Its subcellular location is the perikaryon. It localises to the cell projection. Facilitative glucose transporter that can also mediate the uptake of various other monosaccharides across the cell membrane. In Drosophila melanogaster (Fruit fly), this protein is Glucose transporter type 3 (Glut3).